A 97-amino-acid chain; its full sequence is Integration host factor subunit alpha (97 aa).

This sequence belongs to the bacterial histone-like protein family. In terms of assembly, heterodimer of an alpha and a beta chain.

This protein is one of the two subunits of integration host factor, a specific DNA-binding protein that functions in genetic recombination as well as in transcriptional and translational control. The protein is Integration host factor subunit alpha of Acinetobacter baylyi (strain ATCC 33305 / BD413 / ADP1).